A 375-amino-acid chain; its full sequence is UDP-4-amino-4,6-dideoxy-N-acetyl-beta-L-altrosamine transaminase (375 aa).

Substrate contacts are provided by residues Y6, 26–29 (KQLT), A56, and S178. Residue K183 is modified to N6-(pyridoxal phosphate)lysine. Residues N228 and 313 to 316 (QVHY) each bind substrate.

The protein belongs to the DegT/DnrJ/EryC1 family.

It carries out the reaction UDP-4-amino-4,6-dideoxy-N-acetyl-beta-L-altrosamine + 2-oxoglutarate = UDP-2-acetamido-2,6-dideoxy-beta-L-arabino-hex-4-ulose + L-glutamate. Catalyzes the second step in the biosynthesis of pseudaminic acid, a sialic-acid-like sugar that is used to modify flagellin. Uses UDP-2-acetamido-2,6-dideoxy-beta-L-arabino-4-hexulose as substrate producing UDP-4-amino-4,6-dideoxy-beta-L-AltNAc. The chain is UDP-4-amino-4,6-dideoxy-N-acetyl-beta-L-altrosamine transaminase (pseC) from Helicobacter pylori (strain ATCC 700392 / 26695) (Campylobacter pylori).